A 411-amino-acid polypeptide reads, in one-letter code: Tyrosine--tRNA ligase (411 aa).

Residue Y34 coordinates L-tyrosine. The 'HIGH' region signature appears at 39–48; sequence CTATSLHIGS. L-tyrosine contacts are provided by Y171 and Q175. A 'KMSKS' region motif is present at residues 231–235; sequence KMGKT. K234 contributes to the ATP binding site. One can recognise an S4 RNA-binding domain in the interval 345–411; sequence ISAYNLFYNA…GKKRHILVKV (67 aa).

It belongs to the class-I aminoacyl-tRNA synthetase family. TyrS type 1 subfamily. As to quaternary structure, homodimer.

The protein resides in the cytoplasm. It carries out the reaction tRNA(Tyr) + L-tyrosine + ATP = L-tyrosyl-tRNA(Tyr) + AMP + diphosphate + H(+). Catalyzes the attachment of tyrosine to tRNA(Tyr) in a two-step reaction: tyrosine is first activated by ATP to form Tyr-AMP and then transferred to the acceptor end of tRNA(Tyr). This Rickettsia prowazekii (strain Madrid E) protein is Tyrosine--tRNA ligase.